A 683-amino-acid chain; its full sequence is Long-chain fatty acid transport protein 3 (683 aa).

A helical transmembrane segment spans residues 3-23; sequence ALLLLPLLLLLPLLLLKLHLW. Over residues 119-128 the composition is skewed to gly residues; the sequence is GGDSGEGSAG. Positions 119–145 are disordered; that stretch reads GGDSGEGSAGEGERAAPGAGDAAAGSG. Residues 133 to 145 are compositionally biased toward low complexity; it reads AAPGAGDAAAGSG. Residues 288 to 292, His-331, Thr-428, Asp-528, Arg-543, and Lys-635 contribute to the ATP site; that span reads TSGTT.

It belongs to the ATP-dependent AMP-binding enzyme family. In terms of tissue distribution, expressed in bronchial and bronchiolar epithelial cells (at protein level).

It localises to the mitochondrion membrane. It catalyses the reaction a fatty acid(in) = a fatty acid(out). It carries out the reaction a long-chain fatty acid + ATP + CoA = a long-chain fatty acyl-CoA + AMP + diphosphate. The catalysed reaction is hexadecanoate + ATP + CoA = hexadecanoyl-CoA + AMP + diphosphate. The enzyme catalyses (9Z)-octadecenoate + ATP + CoA = (9Z)-octadecenoyl-CoA + AMP + diphosphate. It catalyses the reaction (9Z,12Z)-octadecadienoate + ATP + CoA = (9Z,12Z)-octadecadienoyl-CoA + AMP + diphosphate. It carries out the reaction (5Z,8Z,11Z,14Z)-eicosatetraenoate + ATP + CoA = (5Z,8Z,11Z,14Z)-eicosatetraenoyl-CoA + AMP + diphosphate. The catalysed reaction is a very long-chain fatty acid + ATP + CoA = a very long-chain fatty acyl-CoA + AMP + diphosphate. The enzyme catalyses tetracosanoate + ATP + CoA = tetracosanoyl-CoA + AMP + diphosphate. In terms of biological role, mainly functions as an acyl-CoA ligase catalyzing the ATP-dependent formation of fatty acyl-CoA using LCFA and very-long-chain fatty acids (VLCFA) as substrates. Can mediate the levels of long-chain fatty acids (LCFA) in the cell by facilitating their transport across membranes. This Homo sapiens (Human) protein is Long-chain fatty acid transport protein 3.